The following is a 368-amino-acid chain: Alanine racemase (368 aa).

The active-site Proton acceptor; specific for D-alanine is the Lys40. Lys40 carries the post-translational modification N6-(pyridoxal phosphate)lysine. Arg134 provides a ligand contact to substrate. The active-site Proton acceptor; specific for L-alanine is the Tyr263. Substrate is bound at residue Met310.

It belongs to the alanine racemase family. Pyridoxal 5'-phosphate is required as a cofactor.

The catalysed reaction is L-alanine = D-alanine. It participates in amino-acid biosynthesis; D-alanine biosynthesis; D-alanine from L-alanine: step 1/1. Its function is as follows. Catalyzes the interconversion of L-alanine and D-alanine. May also act on other amino acids. The chain is Alanine racemase (alr) from Listeria monocytogenes serotype 4b (strain CLIP80459).